A 321-amino-acid polypeptide reads, in one-letter code: tRNA U34 carboxymethyltransferase (321 aa).

Residues Lys90, Trp104, Lys109, Gly129, 151–153 (DPT), 180–181 (IE), Met195, Tyr199, and Arg314 each bind carboxy-S-adenosyl-L-methionine.

Belongs to the class I-like SAM-binding methyltransferase superfamily. CmoB family. Homotetramer.

It catalyses the reaction carboxy-S-adenosyl-L-methionine + 5-hydroxyuridine(34) in tRNA = 5-carboxymethoxyuridine(34) in tRNA + S-adenosyl-L-homocysteine + H(+). In terms of biological role, catalyzes carboxymethyl transfer from carboxy-S-adenosyl-L-methionine (Cx-SAM) to 5-hydroxyuridine (ho5U) to form 5-carboxymethoxyuridine (cmo5U) at position 34 in tRNAs. The chain is tRNA U34 carboxymethyltransferase from Haemophilus influenzae (strain 86-028NP).